The following is a 168-amino-acid chain: Pollen allergen Che a 1 (168 aa).

A signal peptide spans 1-25; the sequence is MAKCQAVFLLVGALCVLSLAGVANA. 3 disulfides stabilise this stretch: Cys38-Cys109, Cys41-Cys153, and Cys62-Cys97. Residue Asn64 is glycosylated (N-linked (GlcNAc...) asparagine).

The protein belongs to the Ole e I family.

It localises to the secreted. The polypeptide is Pollen allergen Che a 1 (Chenopodium album (Fat hen)).